The following is a 249-amino-acid chain: Ubiquinone biosynthesis O-methyltransferase (249 aa).

Residues 1-23 (MTSPSQVLPASAGKPTGPNADPK) form a disordered region. S-adenosyl-L-methionine contacts are provided by arginine 52, glycine 71, aspartate 92, and methionine 136.

This sequence belongs to the methyltransferase superfamily. UbiG/COQ3 family.

The catalysed reaction is a 3-demethylubiquinol + S-adenosyl-L-methionine = a ubiquinol + S-adenosyl-L-homocysteine + H(+). It catalyses the reaction a 3-(all-trans-polyprenyl)benzene-1,2-diol + S-adenosyl-L-methionine = a 2-methoxy-6-(all-trans-polyprenyl)phenol + S-adenosyl-L-homocysteine + H(+). Its pathway is cofactor biosynthesis; ubiquinone biosynthesis. Functionally, O-methyltransferase that catalyzes the 2 O-methylation steps in the ubiquinone biosynthetic pathway. This Cupriavidus pinatubonensis (strain JMP 134 / LMG 1197) (Cupriavidus necator (strain JMP 134)) protein is Ubiquinone biosynthesis O-methyltransferase.